The primary structure comprises 247 residues: MKNTELEQLINDKLNSAAISDYAPNGLQVEGKETVQKIVTGVTASQALLDEAVRLQADAVIVHHGYFWKGESPVIRGMKRRRLKTLLANDINLYGWHLPLDAHPELGNNAQLAALLGITVKGEIEPLVPWGELSMPVPGLELASWIEARLGRKPLWCGDTGPENVQRVAWCTGGGQSFIDSAARFGVDAFITGEVSEQTIHSAREQGLHFYAAGHHATERGGIRALSEWLNENTALDVTFIDIPNPA.

Positions 63, 64, 101, 215, and 219 each coordinate a divalent metal cation.

Belongs to the GTP cyclohydrolase I type 2/NIF3 family. Toroid-shaped homohexamer. In the hexamer, 3 dimers assemble to form a ring-like structure surrounding a central hole.

Its function is as follows. Provides significant protection from radiation damage and may be involved in the degradation of radiation-damaged nucleotides. The sequence is that of GTP cyclohydrolase 1 type 2 homolog (ybgI) from Salmonella typhi.